The primary structure comprises 204 residues: Large ribosomal subunit protein bL25 (204 aa).

Positions 1–20 (MSETYELKAETRDRVGKGSS) are disordered.

The protein belongs to the bacterial ribosomal protein bL25 family. CTC subfamily. Part of the 50S ribosomal subunit; part of the 5S rRNA/L5/L18/L25 subcomplex. Contacts the 5S rRNA. Binds to the 5S rRNA independently of L5 and L18.

Its function is as follows. This is one of the proteins that binds to the 5S RNA in the ribosome where it forms part of the central protuberance. This is Large ribosomal subunit protein bL25 from Rhizobium meliloti (strain 1021) (Ensifer meliloti).